Consider the following 357-residue polypeptide: 3-isopropylmalate dehydrogenase (357 aa).

76–89 (GPQWDTIDPALRPE) contacts NAD(+). Residues Arg-96, Arg-106, Arg-134, and Asp-224 each contribute to the substrate site. Asp-224, Asp-248, and Asp-252 together coordinate Mg(2+). 282–294 (GSAPDIAGQGVAN) lines the NAD(+) pocket.

Belongs to the isocitrate and isopropylmalate dehydrogenases family. LeuB type 1 subfamily. In terms of assembly, homodimer. The cofactor is Mg(2+). Mn(2+) is required as a cofactor.

The protein resides in the cytoplasm. The enzyme catalyses (2R,3S)-3-isopropylmalate + NAD(+) = 4-methyl-2-oxopentanoate + CO2 + NADH. It participates in amino-acid biosynthesis; L-leucine biosynthesis; L-leucine from 3-methyl-2-oxobutanoate: step 3/4. Its function is as follows. Catalyzes the oxidation of 3-carboxy-2-hydroxy-4-methylpentanoate (3-isopropylmalate) to 3-carboxy-4-methyl-2-oxopentanoate. The product decarboxylates to 4-methyl-2 oxopentanoate. This Xylella fastidiosa (strain Temecula1 / ATCC 700964) protein is 3-isopropylmalate dehydrogenase.